The chain runs to 183 residues: Peptidyl-tRNA hydrolase (183 aa).

A tRNA-binding site is contributed by tyrosine 14. Catalysis depends on histidine 19, which acts as the Proton acceptor. 3 residues coordinate tRNA: tyrosine 64, asparagine 66, and asparagine 112.

This sequence belongs to the PTH family. In terms of assembly, monomer.

It is found in the cytoplasm. The enzyme catalyses an N-acyl-L-alpha-aminoacyl-tRNA + H2O = an N-acyl-L-amino acid + a tRNA + H(+). Its function is as follows. Hydrolyzes ribosome-free peptidyl-tRNAs (with 1 or more amino acids incorporated), which drop off the ribosome during protein synthesis, or as a result of ribosome stalling. In terms of biological role, catalyzes the release of premature peptidyl moieties from peptidyl-tRNA molecules trapped in stalled 50S ribosomal subunits, and thus maintains levels of free tRNAs and 50S ribosomes. In Anaplasma phagocytophilum (strain HZ), this protein is Peptidyl-tRNA hydrolase.